Reading from the N-terminus, the 542-residue chain is Chaperonin GroEL 2 (542 aa).

ATP contacts are provided by residues 30–33 (TLGP), Lys51, 87–91 (DGTTT), Gly415, and Asp496.

The protein belongs to the chaperonin (HSP60) family. As to quaternary structure, forms a cylinder of 14 subunits composed of two heptameric rings stacked back-to-back. Interacts with the co-chaperonin GroES.

Its subcellular location is the cytoplasm. The catalysed reaction is ATP + H2O + a folded polypeptide = ADP + phosphate + an unfolded polypeptide.. In terms of biological role, together with its co-chaperonin GroES, plays an essential role in assisting protein folding. The GroEL-GroES system forms a nano-cage that allows encapsulation of the non-native substrate proteins and provides a physical environment optimized to promote and accelerate protein folding. In Cereibacter sphaeroides (strain ATCC 17023 / DSM 158 / JCM 6121 / CCUG 31486 / LMG 2827 / NBRC 12203 / NCIMB 8253 / ATH 2.4.1.) (Rhodobacter sphaeroides), this protein is Chaperonin GroEL 2.